A 339-amino-acid polypeptide reads, in one-letter code: tRNA pseudouridine synthase D (339 aa).

D80 serves as the catalytic Nucleophile. Residues 155–311 enclose the TRUD domain; that stretch reads GFPNYFTEQR…AKGFSWAFEL (157 aa).

The protein belongs to the pseudouridine synthase TruD family.

The catalysed reaction is uridine(13) in tRNA = pseudouridine(13) in tRNA. Responsible for synthesis of pseudouridine from uracil-13 in transfer RNAs. The protein is tRNA pseudouridine synthase D of Haemophilus influenzae (strain PittEE).